A 339-amino-acid chain; its full sequence is Phenylalanine--tRNA ligase alpha subunit (339 aa).

Mg(2+) is bound at residue Glu250.

Belongs to the class-II aminoacyl-tRNA synthetase family. Phe-tRNA synthetase alpha subunit type 1 subfamily. As to quaternary structure, tetramer of two alpha and two beta subunits. Requires Mg(2+) as cofactor.

Its subcellular location is the cytoplasm. The catalysed reaction is tRNA(Phe) + L-phenylalanine + ATP = L-phenylalanyl-tRNA(Phe) + AMP + diphosphate + H(+). This chain is Phenylalanine--tRNA ligase alpha subunit, found in Bacteroides thetaiotaomicron (strain ATCC 29148 / DSM 2079 / JCM 5827 / CCUG 10774 / NCTC 10582 / VPI-5482 / E50).